Here is a 439-residue protein sequence, read N- to C-terminus: Enolase 1-1 (439 aa).

A Phosphothreonine modification is found at Thr85. Residues His159 and Glu168 each contribute to the substrate site. Glu211 acts as the Proton donor in catalysis. Asp246 contacts Mg(2+). Phosphoserine occurs at positions 249 and 250. Tyr253 is subject to Phosphotyrosine. Glu295 and Asp320 together coordinate substrate. Residues Glu295 and Asp320 each contribute to the Mg(2+) site. The active-site Proton acceptor is the Lys345. At Ser351 the chain carries Phosphoserine. Thr353 is modified (phosphothreonine). At Ser355 the chain carries Phosphoserine. Substrate-binding positions include 372-375 and Lys396; that span reads SHRS. Ser421 bears the Phosphoserine mark.

Belongs to the enolase family. As to quaternary structure, homodimer. Mg(2+) serves as cofactor.

The protein resides in the cytoplasm. It carries out the reaction (2R)-2-phosphoglycerate = phosphoenolpyruvate + H2O. The protein operates within carbohydrate degradation; glycolysis; pyruvate from D-glyceraldehyde 3-phosphate: step 4/5. The sequence is that of Enolase 1-1 (eno101) from Schizosaccharomyces pombe (strain 972 / ATCC 24843) (Fission yeast).